The sequence spans 366 residues: Leucine dehydrogenase (366 aa).

Residue lysine 80 is part of the active site. Residue 180–186 coordinates NAD(+); it reads GVGHVAY.

It belongs to the Glu/Leu/Phe/Val dehydrogenases family. Homooctamer.

The catalysed reaction is L-leucine + NAD(+) + H2O = 4-methyl-2-oxopentanoate + NH4(+) + NADH + H(+). It participates in amino-acid degradation; L-leucine degradation; 4-methyl-2-oxopentanoate from L-leucine (dehydrogenase route): step 1/1. Inhibited by pyridoxal phosphate. In terms of biological role, catalyzes the reversible deamination of L-leucine to 4-methyl-2-oxopentanoate. Exhibits the highest activity with L-leucine as substrate, but can also use other L-amino acids such as L-isoleucine, L-valine and L-2-aminovaleric acid. All of the oxo analogs of the amino acid substrates serve as good substrates for the reverse reaction. This is Leucine dehydrogenase (ldh) from Thermoactinomyces intermedius.